A 219-amino-acid chain; its full sequence is Protein Cmaq_0360 (219 aa).

Positions 8-204 (EQGKFLVRLA…EKGPRGDVYE (197 aa)) constitute an AMMECR1 domain.

This chain is Protein Cmaq_0360, found in Caldivirga maquilingensis (strain ATCC 700844 / DSM 13496 / JCM 10307 / IC-167).